The primary structure comprises 70 residues: Conotoxin Cal6.11 (70 aa).

A signal peptide spans 1 to 22; that stretch reads MKLTCVLIIAVLILTACQFIAA. The propeptide occupies 23 to 43; it reads DNTEYRKWRRSGTSTGMRLGS. 3 disulfide bridges follow: cysteine 46/cysteine 57, cysteine 50/cysteine 62, and cysteine 56/cysteine 69. Residues proline 48 and proline 58 each carry the 4-hydroxyproline modification. Residues glutamate 60 and glutamate 67 each carry the 4-carboxyglutamate modification.

This sequence belongs to the conotoxin O1 superfamily. As to expression, expressed by the venom duct.

The protein resides in the secreted. Functionally, probable neurotoxin with unknown target. Possibly targets ion channels. The sequence is that of Conotoxin Cal6.11 from Californiconus californicus (California cone).